The following is a 540-amino-acid chain: IQ motif and ankyrin repeat domain-containing protein 1 (540 aa).

Positions 1–17 (MSTKKGGPKAASGKGQA) are enriched in low complexity. The tract at residues 1–62 (MSTKKGGPKA…PQAPAAPTAE (62 aa)) is disordered. The IQ domain maps to 62–91 (EDKAAIVIQCAFRQYLARRELARRCQERQE). ANK repeat units lie at residues 191-220 (HGNT…NPNT) and 224-253 (FGRT…DPRM). The stretch at 281 to 388 (LTEAMLKNME…EETLAMARLE (108 aa)) forms a coiled coil.

In Mus musculus (Mouse), this protein is IQ motif and ankyrin repeat domain-containing protein 1.